We begin with the raw amino-acid sequence, 264 residues long: Small ribosomal subunit protein mS23 (264 aa).

The disordered stretch occupies residues 233 to 264; the sequence is ARTSNPAGSWKDDTTLNTAQEEESTTSENLHF.

This sequence belongs to the mitochondrion-specific ribosomal protein mS23 family. In terms of assembly, component of the mitochondrial small ribosomal subunit. Mature mitochondrial ribosomes consist of a small (37S) and a large (54S) subunit. The 37S subunit contains at least 33 different proteins and 1 molecule of RNA (15S). The 54S subunit contains at least 45 different proteins and 1 molecule of RNA (21S).

The protein localises to the mitochondrion. The protein is Small ribosomal subunit protein mS23 (RSM25) of Saccharomyces cerevisiae (strain YJM789) (Baker's yeast).